A 276-amino-acid polypeptide reads, in one-letter code: Probable endonuclease 4 (276 aa).

Zn(2+)-binding residues include histidine 70, histidine 108, glutamate 143, aspartate 176, histidine 179, histidine 210, aspartate 223, histidine 225, and glutamate 255.

This sequence belongs to the AP endonuclease 2 family. Zn(2+) is required as a cofactor.

The enzyme catalyses Endonucleolytic cleavage to 5'-phosphooligonucleotide end-products.. Endonuclease IV plays a role in DNA repair. It cleaves phosphodiester bonds at apurinic or apyrimidinic (AP) sites, generating a 3'-hydroxyl group and a 5'-terminal sugar phosphate. The protein is Probable endonuclease 4 of Mesomycoplasma hyopneumoniae (strain 7448) (Mycoplasma hyopneumoniae).